We begin with the raw amino-acid sequence, 89 residues long: Putative defensin-like protein 40 (89 aa).

A signal peptide spans 1-26 (MAGIANGVGLLISFMLICGGMPKGHA). 4 disulfides stabilise this stretch: C33/C88, C46/C69, C55/C81, and C59/C83.

The protein belongs to the DEFL family.

The protein localises to the secreted. This is Putative defensin-like protein 40 from Arabidopsis thaliana (Mouse-ear cress).